A 226-amino-acid polypeptide reads, in one-letter code: ATP synthase subunit a (226 aa).

The next 6 membrane-spanning stretches (helical) occupy residues 17 to 37 (FSYFFHIGLVALIAVIVAMMA), 79 to 99 (LVATLGIIVFFSNIIGIIPGF), 105 to 125 (SLNLTLSLAIIVFVYYHFEGI), 134 to 154 (FAHFMGPIKLLAPLMFPIEIV), 176 to 196 (LFLMVILALVPYIAPLPAYVL), and 199 to 219 (FMAFLQAFIFMILTYVYLAGA).

It belongs to the ATPase A chain family. As to quaternary structure, F-type ATPases have 2 components, CF(1) - the catalytic core - and CF(0) - the membrane proton channel. CF(1) has five subunits: alpha(3), beta(3), gamma(1), delta(1), epsilon(1). CF(0) has three main subunits: a(1), b(2) and c(9-12). The alpha and beta chains form an alternating ring which encloses part of the gamma chain. CF(1) is attached to CF(0) by a central stalk formed by the gamma and epsilon chains, while a peripheral stalk is formed by the delta and b chains.

The protein resides in the cell inner membrane. Functionally, key component of the proton channel; it plays a direct role in the translocation of protons across the membrane. This Campylobacter jejuni subsp. jejuni serotype O:23/36 (strain 81-176) protein is ATP synthase subunit a.